A 1499-amino-acid chain; its full sequence is Rho GTPase-activating protein 35 (1499 aa).

The tract at residues 1 to 266 (MMMARKQDVR…IPYFEALKQQ (266 aa)) is has GTPase activity, required for proper localization. GTP-binding positions include lysine 28, 33–37 (IGKSC), leucine 52, serine 56, 95–97 (EQT), 201–203 (KCD), and 229–231 (SAR). 4 consecutive FF domains span residues 270-327 (IATA…HIHR), 368-422 (KLLE…HLEK), 429-483 (RAEM…HQKQ), and 485-550 (IDRA…HIHF). Position 308 is a phosphotyrosine (tyrosine 308). The residue at position 589 (serine 589) is a Phosphoserine. In terms of domain architecture, pG1 pseudoGTPase spans 592–767 (DPNIDRINLV…LLDSKRNLNL (176 aa)). Serine 770 and serine 773 each carry phosphoserine. The pG2 pseudoGTPase domain occupies 783 to 947 (RIVMCLMCGD…FKDVVEKKNI (165 aa)). A phosphoserine mark is found at serine 970, serine 975, serine 985, and serine 1072. The residue at position 1087 (tyrosine 1087) is a Phosphotyrosine. The residue at position 1105 (tyrosine 1105) is a Phosphotyrosine; by ABL2 and PTK6. Positions 1124-1141 (KAQSNGSGNGSDSEMDTS) are enriched in polar residues. The segment at 1124–1148 (KAQSNGSGNGSDSEMDTSSLERGRK) is disordered. Phosphoserine occurs at positions 1134, 1142, 1150, 1176, 1179, and 1221. Residues 1177-1207 (VGSDDELGPIRKKEEDQASQGYKGDNAVIPY) are disordered. The required for phospholipid binding and regulation of the substrate preference stretch occupies residues 1213-1236 (PRRRNILRSLRRNTKKPKPKPRPS). Threonine 1226 is modified (phosphothreonine). Residue serine 1236 is modified to Phosphoserine. Residues 1249–1436 (VPLTTVVTPE…LFIQQCPFFF (188 aa)) enclose the Rho-GAP domain. The segment at 1446-1499 (GAAPGSPSAMAPTVPFLTSTPATSQPSPPQSPPPTPQSPMQPLLSSQLQAEHTL) is disordered. Low complexity predominate over residues 1448-1470 (APGSPSAMAPTVPFLTSTPATSQ). Residues 1471-1484 (PSPPQSPPPTPQSP) are compositionally biased toward pro residues. Serine 1472 and serine 1476 each carry phosphoserine. A Phosphothreonine modification is found at threonine 1480. Phosphoserine is present on serine 1483. Low complexity predominate over residues 1485–1499 (MQPLLSSQLQAEHTL).

In terms of assembly, interacts with RASA1. Interacts with the general transcription factor GTF2I, the interaction sequesters GTF2I in the cytoplasm. Post-translationally, phosphorylation of Tyr-1105 by PTK6 promotes the association with RASA1, inactivating RHOA while activating RAS. Phosphorylation at Tyr-308 by PDGFRA inhibits binding to GTF2I. Phosphorylated by PRKCA at Ser-1221 and Thr-1226, induces relocalization from the cytoplasm to regions of plasma membrane ruffling and prevents the binding and substrate specificity regulation by phospholipids. In brain, phosphorylated by FYN and SRC. During focal adhesion formation, phosphorylated by MAPK1 and MAPK3 at the C-terminal region, probably at Ser-1451, Ser-1476, Thr-1480 and Ser-1483. Phosphorylation by MAPK1 and MAPK3 inhibits GAP function and localizes ARGHAP35 away from newly forming focal adhesions and stress fibers in cells spreading on fibronectin. Phosphorylation at Ser-1476 and Thr-1480 by GSK3B requires priming by MAPK and inhibits RhoGAP activity and modulates polarized cell migration. Ubiquitously expressed.

It localises to the cytoplasm. The protein localises to the cytoskeleton. The protein resides in the cilium basal body. Its subcellular location is the nucleus. It is found in the cell membrane. Its function is as follows. Rho GTPase-activating protein (GAP). Binds several acidic phospholipids which inhibits the Rho GAP activity to promote the Rac GAP activity. This binding is inhibited by phosphorylation by PRKCA. Involved in cell differentiation as well as cell adhesion and migration, plays an important role in retinal tissue morphogenesis, neural tube fusion, midline fusion of the cerebral hemispheres and mammary gland branching morphogenesis. Transduces signals from p21-ras to the nucleus, acting via the ras GTPase-activating protein (GAP). Transduces SRC-dependent signals from cell-surface adhesion molecules, such as laminin, to promote neurite outgrowth. Regulates axon outgrowth, guidance and fasciculation. Modulates Rho GTPase-dependent F-actin polymerization, organization and assembly, is involved in polarized cell migration and in the positive regulation of ciliogenesis and cilia elongation. During mammary gland development, is required in both the epithelial and stromal compartments for ductal outgrowth. Represses transcription of the glucocorticoid receptor by binding to the cis-acting regulatory sequence 5'-GAGAAAAGAAACTGGAGAAACTC-3'; this function is however unclear and would need additional experimental evidences. The sequence is that of Rho GTPase-activating protein 35 from Rattus norvegicus (Rat).